The chain runs to 214 residues: MSFAREAGRAIRSTLVLWVITALIYPFSMIAIGQILFPWQANGSLITNNQGQVVGSALIGQPFISDRYFNSRPSTTNYSTADPKNDPNKVLQTGISGASNLAPSNPALIDRIKGKPDPDPAKAIQGEIPRLEKGAIKPTAALVYTSGSGLDPHITPEAARAQIERVARVRGLPTNQVEILVTKNTDERFLGIFGEPGVNLLKLNLALDAIANTR.

Residues 17–37 form a helical membrane-spanning segment; sequence LWVITALIYPFSMIAIGQILF.

Belongs to the KdpC family. The system is composed of three essential subunits: KdpA, KdpB and KdpC.

Its subcellular location is the cell inner membrane. Its function is as follows. Part of the high-affinity ATP-driven potassium transport (or Kdp) system, which catalyzes the hydrolysis of ATP coupled with the electrogenic transport of potassium into the cytoplasm. This subunit acts as a catalytic chaperone that increases the ATP-binding affinity of the ATP-hydrolyzing subunit KdpB by the formation of a transient KdpB/KdpC/ATP ternary complex. The protein is Potassium-transporting ATPase KdpC subunit of Microcystis aeruginosa (strain NIES-843 / IAM M-2473).